We begin with the raw amino-acid sequence, 102 residues long: Aspartyl/glutamyl-tRNA(Asn/Gln) amidotransferase subunit C (102 aa).

Belongs to the GatC family. As to quaternary structure, heterotrimer of A, B and C subunits.

The enzyme catalyses L-glutamyl-tRNA(Gln) + L-glutamine + ATP + H2O = L-glutaminyl-tRNA(Gln) + L-glutamate + ADP + phosphate + H(+). The catalysed reaction is L-aspartyl-tRNA(Asn) + L-glutamine + ATP + H2O = L-asparaginyl-tRNA(Asn) + L-glutamate + ADP + phosphate + 2 H(+). In terms of biological role, allows the formation of correctly charged Asn-tRNA(Asn) or Gln-tRNA(Gln) through the transamidation of misacylated Asp-tRNA(Asn) or Glu-tRNA(Gln) in organisms which lack either or both of asparaginyl-tRNA or glutaminyl-tRNA synthetases. The reaction takes place in the presence of glutamine and ATP through an activated phospho-Asp-tRNA(Asn) or phospho-Glu-tRNA(Gln). This chain is Aspartyl/glutamyl-tRNA(Asn/Gln) amidotransferase subunit C, found in Bordetella petrii (strain ATCC BAA-461 / DSM 12804 / CCUG 43448).